Consider the following 505-residue polypeptide: Catalase (505 aa).

Active-site residues include His-56 and Asn-129. Tyr-339 is a heme binding site.

This sequence belongs to the catalase family. The cofactor is heme.

The protein resides in the cytoplasm. It catalyses the reaction 2 H2O2 = O2 + 2 H2O. Functionally, decomposes hydrogen peroxide into water and oxygen; serves to protect cells from the toxic effects of hydrogen peroxide. This is Catalase (katA) from Helicobacter pylori (strain J99 / ATCC 700824) (Campylobacter pylori J99).